Here is a 238-residue protein sequence, read N- to C-terminus: Probable transcriptional regulatory protein CHU_3516 (238 aa).

It belongs to the TACO1 family.

The protein localises to the cytoplasm. The chain is Probable transcriptional regulatory protein CHU_3516 from Cytophaga hutchinsonii (strain ATCC 33406 / DSM 1761 / CIP 103989 / NBRC 15051 / NCIMB 9469 / D465).